The chain runs to 491 residues: Histamine H1 receptor (491 aa).

The Extracellular portion of the chain corresponds to 1 to 30; that stretch reads MTCPNSSCVFEDKMCQGNKTAPANDAQLTP. Residues Asn-5 and Asn-18 are each glycosylated (N-linked (GlcNAc...) asparagine). Residues 31–51 form a helical membrane-spanning segment; it reads LVVVLSTISLVTVGLNLLVLY. Residues 52–65 are Cytoplasmic-facing; the sequence is AVRSERKLHTVGNL. Residues 66–90 traverse the membrane as a helical segment; it reads YIVSLSVADLIVGVVVMPMNILYLL. Over 91–98 the chain is Extracellular; that stretch reads MSRWSLGR. The chain crosses the membrane as a helical span at residues 99-124; the sequence is PLCLFWLSMDYVASTASIFSVFILCI. A disulfide bridge connects residues Cys-101 and Cys-181. Histamine is bound by residues Asp-108 and Thr-113. Residues 108 to 113 form an important for agonist binding region; that stretch reads DYVAST. Over 125–145 the chain is Cytoplasmic; it reads DRYRSVQQPLKYLRYRTKTRA. 2 positions are modified to phosphothreonine: Thr-141 and Thr-143. A helical transmembrane segment spans residues 146 to 165; the sequence is SITILAAWFLSFLWIIPILG. Residues 166 to 189 are Extracellular-facing; the sequence is WRHFQPKTPEPREDKCETDFYNVT. Residues 190–212 traverse the membrane as a helical segment; the sequence is WFKVMTAIINFYLPTLLMLWFYA. Asn-199 contacts histamine. The Cytoplasmic portion of the chain corresponds to 213 to 420; that stretch reads KIYKAVRQHC…MNRERKAAKQ (208 aa). Ser-231 is subject to Phosphoserine. Disordered regions lie at residues 246–297 and 360–385; these read QVGA…KEEK and QSFSRTDSDTPAEPAPAKGKSRSESS. Basic and acidic residues predominate over residues 252–262; it reads PGKESPWEVLK. Phosphoserine is present on residues Ser-384, Ser-400, and Ser-402. A helical membrane pass occupies residues 421-444; the sequence is LGFIMAAFIICWIPYFIFFMVIAF. The segment at 428–432 is important for agonist binding; it reads FIICW. Tyr-435 contacts histamine. A disulfide bridge links Cys-445 with Cys-448. The Extracellular segment spans residues 445 to 450; it reads CESCCN. The chain crosses the membrane as a helical span at residues 451–473; that stretch reads QHVHMFTIWLGYINSTLNPLIYP. Topologically, residues 474–491 are cytoplasmic; that stretch reads LCNENFKKTFKKILHIRS.

This sequence belongs to the G-protein coupled receptor 1 family. In terms of processing, phosphorylation at sites in the second and third cytoplasmic loops independently contribute to agonist-induced receptor down-regulation. In terms of tissue distribution, brain, lung, small intestine, uterus, adrenal medulla and spleen.

It is found in the cell membrane. G-protein-coupled receptor for histamine, a biogenic amine that functions as an immune modulator and a neurotransmitter. Through the H1 receptor, histamine mediates the contraction of smooth muscles and increases capillary permeability due to contraction of terminal venules. Also mediates neurotransmission in the central nervous system and thereby regulates circadian rhythms, emotional and locomotor activities as well as cognitive functions. In Bos taurus (Bovine), this protein is Histamine H1 receptor.